Reading from the N-terminus, the 650-residue chain is Chaperone protein HtpG (650 aa).

Residues 1–349 (MSKTVKKFET…SSDLPLNVSR (349 aa)) form an a; substrate-binding region. The interval 350–566 (EILQEDVQIK…EHGLNANMER (217 aa)) is b. The c stretch occupies residues 567–650 (ILRAMNQTVP…VADGKAAAGE (84 aa)).

Belongs to the heat shock protein 90 family. Homodimer.

The protein localises to the cytoplasm. In terms of biological role, molecular chaperone. Has ATPase activity. This Geobacter sulfurreducens (strain ATCC 51573 / DSM 12127 / PCA) protein is Chaperone protein HtpG.